Consider the following 111-residue polypeptide: Transcription factor S (111 aa).

C4, C7, C24, C27, C72, C75, C100, and C103 together coordinate Zn(2+). Residues 4–27 (CPKCGSMMMPRKENGKTVYKCSKC) form a C4-type zinc finger. The TFIIS-type zinc finger occupies 68–108 (RGISCPSCGNDEAYFWILQTRSADEPATRFYKCTKCGKVWR).

This sequence belongs to the archaeal RpoM/eukaryotic RPA12/RPB9/RPC11 RNA polymerase family.

Induces RNA cleavage activity in the RNA polymerase. In its presence, the cleavage activity of the RNA polymerase truncates the RNA back to position +15 in a stepwise manner by releasing mainly dinucleotides from the 3'-end of the nascent RNA. The truncated RNAs are able to continue elongation. Involved in transcriptional proofreading and fidelity. Misincorporation of nucleotides during elongation of transcription leads to arrested elongation complexes which are rescued by TFS-promoted removal of a dinucleotide from the 3'-end. TFS is able to induce a cleavage resynthesis cycle in stalled elongation complexes (resulting from the next missing nucleotide or a reduced incorporation rate of a wrong nucleotide) preventing misincorporation and enabling proofreading in a post-incorporation manner. Pausing of elongation complexes is the main determinant of TFS-induced RNA cleavage. This is Transcription factor S from Sulfolobus acidocaldarius (strain ATCC 33909 / DSM 639 / JCM 8929 / NBRC 15157 / NCIMB 11770).